We begin with the raw amino-acid sequence, 313 residues long: N-acetyl-gamma-glutamyl-phosphate reductase (313 aa).

Cys117 is a catalytic residue.

Belongs to the NAGSA dehydrogenase family. Type 2 subfamily.

The protein localises to the cytoplasm. It carries out the reaction N-acetyl-L-glutamate 5-semialdehyde + phosphate + NADP(+) = N-acetyl-L-glutamyl 5-phosphate + NADPH + H(+). The protein operates within amino-acid biosynthesis; L-arginine biosynthesis; N(2)-acetyl-L-ornithine from L-glutamate: step 3/4. Its function is as follows. Catalyzes the NADPH-dependent reduction of N-acetyl-5-glutamyl phosphate to yield N-acetyl-L-glutamate 5-semialdehyde. In Burkholderia cenocepacia (strain HI2424), this protein is N-acetyl-gamma-glutamyl-phosphate reductase.